Here is a 102-residue protein sequence, read N- to C-terminus: Small ribosomal subunit protein uS10 (102 aa).

The protein belongs to the universal ribosomal protein uS10 family. In terms of assembly, part of the 30S ribosomal subunit.

In terms of biological role, involved in the binding of tRNA to the ribosomes. This chain is Small ribosomal subunit protein uS10, found in Arthrobacter sp. (strain FB24).